Here is a 581-residue protein sequence, read N- to C-terminus: Proline--tRNA ligase (581 aa).

Belongs to the class-II aminoacyl-tRNA synthetase family. ProS type 1 subfamily. As to quaternary structure, homodimer.

It is found in the cytoplasm. It catalyses the reaction tRNA(Pro) + L-proline + ATP = L-prolyl-tRNA(Pro) + AMP + diphosphate. In terms of biological role, catalyzes the attachment of proline to tRNA(Pro) in a two-step reaction: proline is first activated by ATP to form Pro-AMP and then transferred to the acceptor end of tRNA(Pro). As ProRS can inadvertently accommodate and process non-cognate amino acids such as alanine and cysteine, to avoid such errors it has two additional distinct editing activities against alanine. One activity is designated as 'pretransfer' editing and involves the tRNA(Pro)-independent hydrolysis of activated Ala-AMP. The other activity is designated 'posttransfer' editing and involves deacylation of mischarged Ala-tRNA(Pro). The misacylated Cys-tRNA(Pro) is not edited by ProRS. The protein is Proline--tRNA ligase of Rhodococcus opacus (strain B4).